Reading from the N-terminus, the 617-residue chain is LEAF RUST 10 DISEASE-RESISTANCE LOCUS RECEPTOR-LIKE PROTEIN KINASE-like 2.4 (617 aa).

The first 26 residues, 1-26 (MYYLPSSCLVLFLFFSLFYHLPCASS), serve as a signal peptide directing secretion. Over 27-243 (KQTLGWCESQ…LPTRLSSEAK (217 aa)) the chain is Extracellular. N-linked (GlcNAc...) asparagine glycosylation is found at asparagine 41, asparagine 69, asparagine 86, asparagine 112, and asparagine 184. Residues 244 to 264 (IATIAGVSLLPFLVLTLVVHI) traverse the membrane as a helical segment. The Cytoplasmic portion of the chain corresponds to 265 to 617 (IRKQKTSNDK…SEENSISSEI (353 aa)). The region spanning 307–594 (NSFAEVVGRG…ALEVPPRPVL (288 aa)) is the Protein kinase domain. ATP-binding positions include 313–321 (VGRGGFGIV) and lysine 335. Tyrosine 380 carries the post-translational modification Phosphotyrosine. Aspartate 431 acts as the Proton acceptor in catalysis. Phosphothreonine is present on residues threonine 468 and threonine 471.

The protein belongs to the protein kinase superfamily. Ser/Thr protein kinase family.

The protein resides in the membrane. It catalyses the reaction L-seryl-[protein] + ATP = O-phospho-L-seryl-[protein] + ADP + H(+). The catalysed reaction is L-threonyl-[protein] + ATP = O-phospho-L-threonyl-[protein] + ADP + H(+). This chain is LEAF RUST 10 DISEASE-RESISTANCE LOCUS RECEPTOR-LIKE PROTEIN KINASE-like 2.4, found in Arabidopsis thaliana (Mouse-ear cress).